A 312-amino-acid polypeptide reads, in one-letter code: Acetyl-coenzyme A carboxylase carboxyl transferase subunit alpha (312 aa).

In terms of domain architecture, CoA carboxyltransferase C-terminal spans 36–286 (RLDKEVKSIY…KEYFLDALRT (251 aa)).

It belongs to the AccA family. As to quaternary structure, acetyl-CoA carboxylase is a heterohexamer composed of biotin carboxyl carrier protein (AccB), biotin carboxylase (AccC) and two subunits each of ACCase subunit alpha (AccA) and ACCase subunit beta (AccD).

Its subcellular location is the cytoplasm. The enzyme catalyses N(6)-carboxybiotinyl-L-lysyl-[protein] + acetyl-CoA = N(6)-biotinyl-L-lysyl-[protein] + malonyl-CoA. The protein operates within lipid metabolism; malonyl-CoA biosynthesis; malonyl-CoA from acetyl-CoA: step 1/1. Its function is as follows. Component of the acetyl coenzyme A carboxylase (ACC) complex. First, biotin carboxylase catalyzes the carboxylation of biotin on its carrier protein (BCCP) and then the CO(2) group is transferred by the carboxyltransferase to acetyl-CoA to form malonyl-CoA. The polypeptide is Acetyl-coenzyme A carboxylase carboxyl transferase subunit alpha (Helicobacter pylori (strain G27)).